We begin with the raw amino-acid sequence, 298 residues long: Protoheme IX farnesyltransferase (298 aa).

9 helical membrane passes run 26-46 (VVGH…PGVP), 52-72 (FWAS…NHFL), 98-118 (VVGF…AFVN), 120-140 (LTAF…TVYL), 148-168 (IVIG…AVTG), 174-194 (ALLL…AYAI), 214-234 (IAFT…AGLM), 241-261 (SGEI…YYAI), and 278-298 (YSLV…YIVL).

This sequence belongs to the UbiA prenyltransferase family. Protoheme IX farnesyltransferase subfamily.

The protein resides in the cell inner membrane. It carries out the reaction heme b + (2E,6E)-farnesyl diphosphate + H2O = Fe(II)-heme o + diphosphate. It participates in porphyrin-containing compound metabolism; heme O biosynthesis; heme O from protoheme: step 1/1. Its function is as follows. Converts heme B (protoheme IX) to heme O by substitution of the vinyl group on carbon 2 of heme B porphyrin ring with a hydroxyethyl farnesyl side group. This Methylococcus capsulatus (strain ATCC 33009 / NCIMB 11132 / Bath) protein is Protoheme IX farnesyltransferase.